The primary structure comprises 202 residues: Small ribosomal subunit protein uS5 (202 aa).

The span at 1–13 (MPGQQRRGGGSGG) shows a compositional bias: gly residues. A disordered region spans residues 1–31 (MPGQQRRGGGSGGSDRRERRDRSGGGPAQEK). Basic and acidic residues predominate over residues 14–23 (SDRRERRDRS). Residues 34–97 (YVERVVAINR…EEAKKHFFKV (64 aa)) form the S5 DRBM domain.

The protein belongs to the universal ribosomal protein uS5 family. As to quaternary structure, part of the 30S ribosomal subunit. Contacts proteins S4 and S8.

In terms of biological role, with S4 and S12 plays an important role in translational accuracy. Functionally, located at the back of the 30S subunit body where it stabilizes the conformation of the head with respect to the body. The sequence is that of Small ribosomal subunit protein uS5 from Frankia alni (strain DSM 45986 / CECT 9034 / ACN14a).